We begin with the raw amino-acid sequence, 1680 residues long: GRIP and coiled-coil domain-containing protein 2 (1680 aa).

The residue at position 1 (M1) is an N-acetylmethionine. Positions 1–14 (MEDSAPDAVAAAPS) are enriched in low complexity. 2 disordered regions span residues 1 to 23 (MEDS…KLET) and 1468 to 1522 (KSEP…SSAG). Positions 31–1614 (KFAKKQMMLL…REKSVANLEY (1584 aa)) form a coiled coil. The segment covering 1469–1484 (SEPSTRSPASSHQPSK) has biased composition (polar residues). S1475 and S1479 each carry phosphoserine. The interval 1570–1609 (HLNGLLRETEATNAILMEQIKLLKSEIRRLERNQEREKSV) is mediates interaction with RAB6A. A mediates interaction with RAB9A region spans residues 1570-1680 (HLNGLLRETE…SYLHSWSGLR (111 aa)). The GRIP domain maps to 1605–1655 (REKSVANLEYLKNVLLRFIFLKPGSERERLLPVIDTMLQLSPEEKGKLATV).

Homodimer. Interacts (via GRIP domain) with RAB6A (preferentially in its GTP-bound form). May interact (RAB6A-dependent) with ARL1; might be involved in GCC2 Golgi localization. Interacts (probably via GRIP domain) with RAB9A (preferentially in its GTP-bound form). Interacts with CLASP1 and CLASP2; recruits both proteins to membranes of the TGN. Interacts with STX16.

It localises to the cytoplasm. Its subcellular location is the golgi apparatus. The protein resides in the trans-Golgi network membrane. In terms of biological role, golgin which probably tethers transport vesicles to the trans-Golgi network (TGN) and regulates vesicular transport between the endosomes and the Golgi. As a RAB9A effector it is involved in recycling of the mannose 6-phosphate receptor from the late endosomes to the TGN. May also play a role in transport between the recycling endosomes and the Golgi. Required for maintenance of the Golgi structure, it is involved in the biogenesis of noncentrosomal, Golgi-associated microtubules through recruitment of CLASP1 and CLASP2. The protein is GRIP and coiled-coil domain-containing protein 2 (Gcc2) of Mus musculus (Mouse).